A 386-amino-acid chain; its full sequence is Succinate--CoA ligase [ADP-forming] subunit beta (386 aa).

Residues 9-244 (KELLRSYGVP…ETEEDPREVE (236 aa)) form the ATP-grasp domain. ATP is bound by residues K46, 53–55 (GRG), E99, C102, and E107. 2 residues coordinate Mg(2+): N199 and D213. Substrate contacts are provided by residues N264 and 321–323 (GIM).

This sequence belongs to the succinate/malate CoA ligase beta subunit family. In terms of assembly, heterotetramer of two alpha and two beta subunits. Mg(2+) serves as cofactor.

The enzyme catalyses succinate + ATP + CoA = succinyl-CoA + ADP + phosphate. It carries out the reaction GTP + succinate + CoA = succinyl-CoA + GDP + phosphate. The protein operates within carbohydrate metabolism; tricarboxylic acid cycle; succinate from succinyl-CoA (ligase route): step 1/1. Functionally, succinyl-CoA synthetase functions in the citric acid cycle (TCA), coupling the hydrolysis of succinyl-CoA to the synthesis of either ATP or GTP and thus represents the only step of substrate-level phosphorylation in the TCA. The beta subunit provides nucleotide specificity of the enzyme and binds the substrate succinate, while the binding sites for coenzyme A and phosphate are found in the alpha subunit. This chain is Succinate--CoA ligase [ADP-forming] subunit beta, found in Exiguobacterium sibiricum (strain DSM 17290 / CCUG 55495 / CIP 109462 / JCM 13490 / 255-15).